The sequence spans 450 residues: Bifunctional apoptosis regulator (450 aa).

The tract at residues methionine 1–glycine 24 is disordered. At methionine 1 to arginine 140 the chain is on the cytoplasmic side. The RING-type zinc finger occupies cysteine 34–arginine 74. A helical transmembrane segment spans residues glycine 141–valine 161. Topologically, residues tyrosine 162–glutamate 331 are extracellular. The SAM domain maps to tryptophan 182–leucine 249. Asparagine 232 carries an N-linked (GlcNAc...) asparagine glycan. A helical transmembrane segment spans residues phenylalanine 332–leucine 352. The Cytoplasmic portion of the chain corresponds to glutamate 353–arginine 360. A helical membrane pass occupies residues phenylalanine 361–tryptophan 381. Over serine 382–glycine 404 the chain is Extracellular. A helical transmembrane segment spans residues leucine 405–tryptophan 425. The Cytoplasmic portion of the chain corresponds to alanine 426–phenylalanine 450.

Interacts with CASP8, BCL2 and BCL2L1 through SAM domain and also with HIP1, IFT57, ESRRBL1 and BCAP31. Interacts with NGFR; this interaction inhibits NF-kappa-B and JNK-related signaling pathways. Mediates RING-dependent self-ubiquitination leading to proteasomal degradation.

It is found in the endoplasmic reticulum membrane. It catalyses the reaction S-ubiquitinyl-[E2 ubiquitin-conjugating enzyme]-L-cysteine + [acceptor protein]-L-lysine = [E2 ubiquitin-conjugating enzyme]-L-cysteine + N(6)-ubiquitinyl-[acceptor protein]-L-lysine.. Functionally, membrane-bound E3 ubiquitin ligase that plays a role in several processes including apoptosis regulation or reticulum endoplasmic stress. Has anti-apoptotic activity, both for apoptosis triggered via death-receptors and via mitochondrial factors. Contributes to the dynamic control of IRE1/ERN1 signaling during ER stress by inducing BAX inhibitor 1/TMBIM6 proteasomal degradation. Promotes the activation of TGF-beta signaling by mediating the 'Lys-63'-linked ubiquitination of TGFBR1 which is critical to activate the pathway. Together with NGFR, negatively regulates NF-kappa-B and JNK-related signaling pathways. Promotes the proteasome-mediated degradation of PNPLA3, a protein involveld in lipid metabolism. In Rattus norvegicus (Rat), this protein is Bifunctional apoptosis regulator (Bfar).